We begin with the raw amino-acid sequence, 208 residues long: Protein-L-isoaspartate O-methyltransferase (208 aa).

Residue Ser59 is part of the active site.

Belongs to the methyltransferase superfamily. L-isoaspartyl/D-aspartyl protein methyltransferase family.

It is found in the cytoplasm. The enzyme catalyses [protein]-L-isoaspartate + S-adenosyl-L-methionine = [protein]-L-isoaspartate alpha-methyl ester + S-adenosyl-L-homocysteine. Its function is as follows. Catalyzes the methyl esterification of L-isoaspartyl residues in peptides and proteins that result from spontaneous decomposition of normal L-aspartyl and L-asparaginyl residues. It plays a role in the repair and/or degradation of damaged proteins. This Escherichia fergusonii (strain ATCC 35469 / DSM 13698 / CCUG 18766 / IAM 14443 / JCM 21226 / LMG 7866 / NBRC 102419 / NCTC 12128 / CDC 0568-73) protein is Protein-L-isoaspartate O-methyltransferase.